Here is a 38-residue protein sequence, read N- to C-terminus: Conotoxin FVIA (38 aa).

Residues I1–R12 constitute a propeptide that is removed on maturation. Intrachain disulfides connect C13–C28, C20–C32, and C27–C37. The residue at position 37 (C37) is a Cysteine amide.

The protein belongs to the conotoxin O1 superfamily. As to expression, expressed by the venom duct.

The protein localises to the secreted. Omega-conotoxins act at presynaptic membranes, they bind and block voltage-gated calcium channels (Cav). This peptide reversibly and selectively inhibits Cav2.2/CACNA1B (IC(50)=11.5 nM) voltage-gated calcium channels. Channel time recovery after toxin exposure is short (about 50 seconds). In vivo, it effectively and dose-dependently reduces nociceptive behavior in the formalin test and in neuropathic pain models, and reduces mechanical and thermal allodynia in the tail nerve injury rat model. It also shows significant analgesic effects on writhing in mouse neurotransmitter- and cytokine-induced pain models, though it has no effect on acute thermal pain and interferon-gamma-induced pain. It also depresses blood pressure immediately after administration, but pressure recovers relatively quickly and completely. This Conus fulmen (Thunderbolt cone) protein is Conotoxin FVIA.